Here is a 147-residue protein sequence, read N- to C-terminus: SsrA-binding protein (147 aa).

Belongs to the SmpB family.

Its subcellular location is the cytoplasm. Functionally, required for rescue of stalled ribosomes mediated by trans-translation. Binds to transfer-messenger RNA (tmRNA), required for stable association of tmRNA with ribosomes. tmRNA and SmpB together mimic tRNA shape, replacing the anticodon stem-loop with SmpB. tmRNA is encoded by the ssrA gene; the 2 termini fold to resemble tRNA(Ala) and it encodes a 'tag peptide', a short internal open reading frame. During trans-translation Ala-aminoacylated tmRNA acts like a tRNA, entering the A-site of stalled ribosomes, displacing the stalled mRNA. The ribosome then switches to translate the ORF on the tmRNA; the nascent peptide is terminated with the 'tag peptide' encoded by the tmRNA and targeted for degradation. The ribosome is freed to recommence translation, which seems to be the essential function of trans-translation. This is SsrA-binding protein from Mycoplasma pneumoniae (strain ATCC 29342 / M129 / Subtype 1) (Mycoplasmoides pneumoniae).